A 489-amino-acid chain; its full sequence is UDP-N-acetylmuramate--L-alanine ligase (489 aa).

Residue 128-134 coordinates ATP; that stretch reads GTHGKTT.

This sequence belongs to the MurCDEF family.

Its subcellular location is the cytoplasm. The enzyme catalyses UDP-N-acetyl-alpha-D-muramate + L-alanine + ATP = UDP-N-acetyl-alpha-D-muramoyl-L-alanine + ADP + phosphate + H(+). The protein operates within cell wall biogenesis; peptidoglycan biosynthesis. Cell wall formation. The polypeptide is UDP-N-acetylmuramate--L-alanine ligase (Shewanella sediminis (strain HAW-EB3)).